The primary structure comprises 787 residues: Transcriptional corepressor LEUNIG_HOMOLOG (787 aa).

A required for SEU-binding region spans residues 1-88 (MAQSNWEADK…IEAQQGKAKE (88 aa)). Positions 8–40 (ADKMLDVYIYDYLVKKKLHNTAKSFMTEGKVSP) constitute a LisH domain. Positions 77-106 (AYIEAQQGKAKEQQMQIQQLQMMRQAQMQR) form a coiled coil. Positions 299–413 (NMTNSPMYGG…TPSTHTPVDG (115 aa)) are disordered. Composition is skewed to low complexity over residues 336–346 (SIGSPMQSSSS) and 355–372 (QQSS…QSQQ). The segment covering 380–409 (PSSSGPANSTGTGNTVGPSNSQPSTPSTHT) has biased composition (polar residues). WD repeat units lie at residues 508–547 (KSAS…VEST), 550–589 (EHAH…YFLR), 593–633 (GHAA…VRAV), 635–671 (GAST…KRVN), 675–715 (GHSS…HELS), 717–755 (SGNK…CMTV), and 757–787 (GHEC…KIWK).

Forms corepressor complexes with SLK1 and SLK2; LUH is the transcription repressor subunit and SLK1 and SLK2 the specific DNA-binding adapters. Interacts with SEU. Binds to YAB3, YAB5 and YAB1/FIL; these complexes promote adaxial cell identity in leaves as well as embryonic shoot apical meristem (SAM) initiation and postembryonic SAM maintenance. As to expression, expressed in roots, stems, leaves, seedlings, apex, flowers, siliques, flower organs and seeds (including seed coat).

Its subcellular location is the nucleus. Functionally, transcription repressor subunit of the SEU-SLK1 and SEU-SLK2 transcriptional corepressor of abiotic stress (e.g. salt and osmotic stress) response genes, by means of an epigenetic process involving histone modification (e.g. H3K9 and H3K14 acetylation), probably by recruiting HDAC, to facilitate the condensation of chromatin thus preventing transcription at the target genes. Can also act as a transcription activator. Implicated in embryo and floral development. Involved in post-synthesis cell wall modifications necessary for mucilage extrusion from seeds upon imbibition, probably by promoting the expression of genes required for mucilage maturation (e.g. MUM2). Regulates the maintenance on leaf polarity and meristem activity as well as the initiation of embryonic shoot apical meristem (SAM) development. The protein is Transcriptional corepressor LEUNIG_HOMOLOG of Arabidopsis thaliana (Mouse-ear cress).